Consider the following 433-residue polypeptide: Enolase (433 aa).

Gln163 is a (2R)-2-phosphoglycerate binding site. The Proton donor role is filled by Glu205. Residues Asp242, Glu291, and Asp318 each coordinate Mg(2+). The (2R)-2-phosphoglycerate site is built by Lys343, Arg372, Ser373, and Lys394. Lys343 (proton acceptor) is an active-site residue.

Belongs to the enolase family. It depends on Mg(2+) as a cofactor.

Its subcellular location is the cytoplasm. It localises to the secreted. It is found in the cell surface. It catalyses the reaction (2R)-2-phosphoglycerate = phosphoenolpyruvate + H2O. Its pathway is carbohydrate degradation; glycolysis; pyruvate from D-glyceraldehyde 3-phosphate: step 4/5. Catalyzes the reversible conversion of 2-phosphoglycerate (2-PG) into phosphoenolpyruvate (PEP). It is essential for the degradation of carbohydrates via glycolysis. This chain is Enolase, found in Methylibium petroleiphilum (strain ATCC BAA-1232 / LMG 22953 / PM1).